Here is a 177-residue protein sequence, read N- to C-terminus: ATP synthase subunit delta (177 aa).

Belongs to the ATPase delta chain family. F-type ATPases have 2 components, F(1) - the catalytic core - and F(0) - the membrane proton channel. F(1) has five subunits: alpha(3), beta(3), gamma(1), delta(1), epsilon(1). F(0) has three main subunits: a(1), b(2) and c(10-14). The alpha and beta chains form an alternating ring which encloses part of the gamma chain. F(1) is attached to F(0) by a central stalk formed by the gamma and epsilon chains, while a peripheral stalk is formed by the delta and b chains.

Its subcellular location is the cell inner membrane. F(1)F(0) ATP synthase produces ATP from ADP in the presence of a proton or sodium gradient. F-type ATPases consist of two structural domains, F(1) containing the extramembraneous catalytic core and F(0) containing the membrane proton channel, linked together by a central stalk and a peripheral stalk. During catalysis, ATP synthesis in the catalytic domain of F(1) is coupled via a rotary mechanism of the central stalk subunits to proton translocation. Its function is as follows. This protein is part of the stalk that links CF(0) to CF(1). It either transmits conformational changes from CF(0) to CF(1) or is implicated in proton conduction. This chain is ATP synthase subunit delta, found in Aliivibrio salmonicida (strain LFI1238) (Vibrio salmonicida (strain LFI1238)).